Consider the following 251-residue polypeptide: Hydroxyacylglutathione hydrolase (251 aa).

Zn(2+)-binding residues include H53, H55, D57, H58, H110, D127, and H165.

Belongs to the metallo-beta-lactamase superfamily. Glyoxalase II family. As to quaternary structure, monomer. The cofactor is Zn(2+).

It catalyses the reaction an S-(2-hydroxyacyl)glutathione + H2O = a 2-hydroxy carboxylate + glutathione + H(+). It functions in the pathway secondary metabolite metabolism; methylglyoxal degradation; (R)-lactate from methylglyoxal: step 2/2. In terms of biological role, thiolesterase that catalyzes the hydrolysis of S-D-lactoyl-glutathione to form glutathione and D-lactic acid. This chain is Hydroxyacylglutathione hydrolase, found in Erwinia tasmaniensis (strain DSM 17950 / CFBP 7177 / CIP 109463 / NCPPB 4357 / Et1/99).